Consider the following 875-residue polypeptide: Translation initiation factor IF-2 (875 aa).

2 disordered regions span residues 123–204 (EKEK…EKPK) and 240–278 (ETKE…PVET). Positions 240–252 (ETKEEKAELEALR) are enriched in basic and acidic residues. Residues 259-268 (PKKKKKKKKK) show a composition bias toward basic residues. The span at 269 to 278 (KEEEKAPVET) shows a compositional bias: basic and acidic residues. The region spanning 379–547 (ERPPVVTVMG…NILLVSEILE (169 aa)) is the tr-type G domain. Residues 388–395 (GHVDHGKT) form a G1 region. 388-395 (GHVDHGKT) is a GTP binding site. Residues 413-417 (GITQH) form a G2 region. Residues 435 to 438 (DTPG) are G3. GTP-binding positions include 435–439 (DTPGH) and 489–492 (NKID). Residues 489-492 (NKID) are G4. Residues 525–527 (SAK) are G5.

It belongs to the TRAFAC class translation factor GTPase superfamily. Classic translation factor GTPase family. IF-2 subfamily.

It localises to the cytoplasm. One of the essential components for the initiation of protein synthesis. Protects formylmethionyl-tRNA from spontaneous hydrolysis and promotes its binding to the 30S ribosomal subunits. Also involved in the hydrolysis of GTP during the formation of the 70S ribosomal complex. In Persephonella marina (strain DSM 14350 / EX-H1), this protein is Translation initiation factor IF-2.